Consider the following 317-residue polypeptide: Probable transcription factor At5g61620 (317 aa).

Residues 12 to 25 form a CCHC-type zinc finger; the sequence is CSHCGHNGHNARTC. Residues 77–111 are disordered; it reads DPIAAVDDTGYHSDGQIHSKKGKTAHEKKKGKPWT. Residues 94–108 are compositionally biased toward basic residues; that stretch reads HSKKGKTAHEKKKGK. The HTH myb-type domain maps to 102-158; sequence HEKKKGKPWTEEEHRNFLIGLNKLGKGDWRGIAKSFVSTRTPTQVASHAQKYFIRLN. The segment at residues 130–154 is a DNA-binding region (H-T-H motif); that stretch reads WRGIAKSFVSTRTPTQVASHAQKYF. Positions 173 to 206 are disordered; that stretch reads SLEDQKEKERNSQDASTKTPPKQPITGIQQPVVQ. The span at 175 to 184 shows a compositional bias: basic and acidic residues; it reads EDQKEKERNS. Residues 185–206 are compositionally biased toward polar residues; the sequence is QDASTKTPPKQPITGIQQPVVQ.

It localises to the nucleus. In terms of biological role, probable transcription factor involved in somatic embryogenesis. Acts as a positive regulator of BHLH109. The sequence is that of Probable transcription factor At5g61620 from Arabidopsis thaliana (Mouse-ear cress).